We begin with the raw amino-acid sequence, 329 residues long: Sex comb on midleg-like protein 1 (329 aa).

A phosphoserine mark is found at S138 and S238. An SAM domain is found at 258 to 325 (WSVEAVVLFL…YYIDRLKQGK (68 aa)).

The protein belongs to the SCM family.

The protein localises to the nucleus. Putative Polycomb group (PcG) protein. PcG proteins act by forming multiprotein complexes, which are required to maintain the transcriptionally repressive state of homeotic genes throughout development. May be involved in spermatogenesis during sexual maturation. The polypeptide is Sex comb on midleg-like protein 1 (SCML1) (Nomascus leucogenys (Northern white-cheeked gibbon)).